Reading from the N-terminus, the 269-residue chain is CUE domain-containing protein 2-B (269 aa).

Positions 110–130 (ASPSEKTATEPLEGAVAQDKD) are disordered. In terms of domain architecture, CUE spans 131–174 (DPKTGVDLLLEIFPSCTITQAQTALSMAKGDLEDAVQIIVDGKV).

The protein belongs to the CUEDC2 family. Post-translationally, phosphorylated.

The protein localises to the cytoplasm. Its subcellular location is the nucleus. Functionally, may play a role in targeting proteins for ubiquitination and subsequent proteasomal degradation. The polypeptide is CUE domain-containing protein 2-B (cuedc2-b) (Xenopus laevis (African clawed frog)).